The following is a 1433-amino-acid chain: Bacillopeptidase F (1433 aa).

An N-terminal signal peptide occupies residues 1–30 (MRKKTKNRLISSVLSTVVISSLLFPGAAGA). Positions 31–194 (SSKVTSPSVK…NMKKAQKAIK (164 aa)) are excised as a propeptide. The region spanning 68–177 (TFLIKFKDLA…KVLPNEKRQL (110 aa)) is the Inhibitor I9 domain. The 313-residue stretch at 200 to 512 (EWNVDQIDAP…HGLVNAFDAV (313 aa)) folds into the Peptidase S8 domain. Residues Asp227, His274, and Ser452 each act as charge relay system in the active site. A propeptide spanning residues 756-1433 (SAYKGQNIQV…NGKLNMNTEN (678 aa)) is cleaved from the precursor. Residues 800–830 (KLGVEKPSGKQKKKPVNPKKAKPSANTAVKH) form a disordered region. The segment covering 808–821 (GKQKKKPVNPKKAK) has biased composition (basic residues).

It belongs to the peptidase S8 family.

Its subcellular location is the secreted. This Bacillus subtilis (strain 168) protein is Bacillopeptidase F (bpr).